The chain runs to 129 residues: Small ribosomal subunit protein uS11 (129 aa).

This sequence belongs to the universal ribosomal protein uS11 family. In terms of assembly, part of the 30S ribosomal subunit. Interacts with proteins S7 and S18. Binds to IF-3.

In terms of biological role, located on the platform of the 30S subunit, it bridges several disparate RNA helices of the 16S rRNA. Forms part of the Shine-Dalgarno cleft in the 70S ribosome. This Serratia proteamaculans (strain 568) protein is Small ribosomal subunit protein uS11.